The following is a 221-amino-acid chain: Zingipain-1 (221 aa).

3 disulfides stabilise this stretch: Cys24-Cys65, Cys58-Cys98, and Cys155-Cys206. Cys27 is a catalytic residue. Residues Asn95 and Asn156 are each glycosylated (N-linked (GlcNAc...) asparagine). Active-site residues include His161 and Asn181.

It belongs to the peptidase C1 family.

It catalyses the reaction Preferential cleavage of peptides with a proline residue at the P2 position.. Cysteine proteinase with a high level of diversity in substrate specificity, an amino acid bearing a proline residue at the P2 position is preferred. The sequence is that of Zingipain-1 from Zingiber officinale (Ginger).